Reading from the N-terminus, the 207-residue chain is Small ribosomal subunit protein uS4c (207 aa).

The tract at residues 20–52 (GFSKKIDRNHTPPGQHGWKKKASDQKKSKESQY) is disordered. A compositionally biased stretch (basic and acidic residues) spans 40–52 (KASDQKKSKESQY). The region spanning 97 to 158 (MRLDNIIYRL…NSQQLIKNYL (62 aa)) is the S4 RNA-binding domain.

The protein belongs to the universal ribosomal protein uS4 family. As to quaternary structure, part of the 30S ribosomal subunit. Contacts protein S5. The interaction surface between S4 and S5 is involved in control of translational fidelity.

It is found in the plastid. Its function is as follows. One of the primary rRNA binding proteins, it binds directly to 16S rRNA where it nucleates assembly of the body of the 30S subunit. Functionally, with S5 and S12 plays an important role in translational accuracy. The chain is Small ribosomal subunit protein uS4c (rps4) from Prototheca wickerhamii.